The primary structure comprises 607 residues: Oligoendopeptidase F homolog (607 aa).

H384 is a binding site for Zn(2+). Residue E385 is part of the active site. Residues H388 and H391 each coordinate Zn(2+).

It belongs to the peptidase M3B family. It depends on Zn(2+) as a cofactor.

This is Oligoendopeptidase F homolog (pepF) from Mycoplasma genitalium (strain ATCC 33530 / DSM 19775 / NCTC 10195 / G37) (Mycoplasmoides genitalium).